A 325-amino-acid chain; its full sequence is MLKAPRFWYQPRSLLGGILSPFSFLYQIIVRIRRGLYAVGLKKISKFPVPIVIVGNITVGGSGKTPFVIWLANELKNRGFRPGVVSRGYGGKANRFLQTVTENSDPLQVGDEAVLLMKKIDCPMVVCRDRGAAVKHLLRNFQCDVVIGDDGLQHYSLGRDLEIALLDDRHLGNGRCLPAGPLREPKSRLNTVDFVVPKQLRPNEIYQLKNPAKKIDFNELKELTVHAVAGIGNPGYFFKQLETLGANVIAHPFRDHYFYRSEDFNFDDDHLIILTEKDAIKCKQFDDERLFCFSVDAVVPDQFQNDFFRLISNIILRKQAQREGI.

58–65 (TVGGSGKT) is an ATP binding site.

This sequence belongs to the LpxK family.

It carries out the reaction a lipid A disaccharide + ATP = a lipid IVA + ADP + H(+). It participates in glycolipid biosynthesis; lipid IV(A) biosynthesis; lipid IV(A) from (3R)-3-hydroxytetradecanoyl-[acyl-carrier-protein] and UDP-N-acetyl-alpha-D-glucosamine: step 6/6. Its function is as follows. Transfers the gamma-phosphate of ATP to the 4'-position of a tetraacyldisaccharide 1-phosphate intermediate (termed DS-1-P) to form tetraacyldisaccharide 1,4'-bis-phosphate (lipid IVA). This is Tetraacyldisaccharide 4'-kinase from Coxiella burnetii (strain CbuK_Q154) (Coxiella burnetii (strain Q154)).